The following is a 370-amino-acid chain: Probable trehalose-phosphate phosphatase 6 (370 aa).

The protein belongs to the trehalose phosphatase family. It depends on a divalent metal cation as a cofactor.

It carries out the reaction alpha,alpha-trehalose 6-phosphate + H2O = alpha,alpha-trehalose + phosphate. It functions in the pathway glycan biosynthesis; trehalose biosynthesis. Functionally, removes the phosphate from trehalose 6-phosphate to produce free trehalose. Trehalose accumulation in plant may improve abiotic stress tolerance. This Oryza sativa subsp. japonica (Rice) protein is Probable trehalose-phosphate phosphatase 6 (TPP6).